A 286-amino-acid polypeptide reads, in one-letter code: 3-methyl-2-oxobutanoate hydroxymethyltransferase (286 aa).

Positions 67 and 106 each coordinate Mg(2+). Residues 67–68 (DS), D106, and K136 contribute to the 3-methyl-2-oxobutanoate site. E138 lines the Mg(2+) pocket. Catalysis depends on E204, which acts as the Proton acceptor.

The protein belongs to the PanB family. Homodecamer; pentamer of dimers. Mg(2+) serves as cofactor.

It is found in the cytoplasm. It catalyses the reaction 3-methyl-2-oxobutanoate + (6R)-5,10-methylene-5,6,7,8-tetrahydrofolate + H2O = 2-dehydropantoate + (6S)-5,6,7,8-tetrahydrofolate. Its pathway is cofactor biosynthesis; (R)-pantothenate biosynthesis; (R)-pantoate from 3-methyl-2-oxobutanoate: step 1/2. Its function is as follows. Catalyzes the reversible reaction in which hydroxymethyl group from 5,10-methylenetetrahydrofolate is transferred onto alpha-ketoisovalerate to form ketopantoate. The protein is 3-methyl-2-oxobutanoate hydroxymethyltransferase of Mycobacterium leprae (strain TN).